A 686-amino-acid chain; its full sequence is Acyl-CoA synthetase short-chain family member 3, mitochondrial (686 aa).

The transit peptide at 1–29 (MKPSWLQCRKVTSAGGLGGPLPGSSPARG) directs the protein to the mitochondrion. CoA is bound at residue 227–230 (EPGR). Residues 425–427 (GER) and 446–451 (DHWWQT) contribute to the ATP site. K518 bears the N6-succinyllysine mark. Residue K524 is modified to N6-acetyllysine. 3 residues coordinate ATP: D539, R554, and R565. R624 contributes to the CoA binding site.

Belongs to the ATP-dependent AMP-binding enzyme family.

The protein resides in the mitochondrion matrix. The catalysed reaction is acetate + ATP + CoA = acetyl-CoA + AMP + diphosphate. It catalyses the reaction propanoate + ATP + CoA = propanoyl-CoA + AMP + diphosphate. The enzyme catalyses butanoate + ATP + CoA = butanoyl-CoA + AMP + diphosphate. In terms of biological role, catalyzes the synthesis of acetyl-CoA from short-chain fatty acids. Propionate is the preferred substrate. Can utilize acetate and butyrate with a much lower affinity. The protein is Acyl-CoA synthetase short-chain family member 3, mitochondrial (ACSS3) of Homo sapiens (Human).